Here is a 156-residue protein sequence, read N- to C-terminus: MNIIEANVATPDARVAITIARFNNFINDSLLEGAIDALKRIGQVKDENITIVWVPGAYELPLAAGALAKTGKYDAVIALGTVIRGGTAHFEYVAGGASNGLAHVAQDSEIPVAFGVLTTESIEQAIERAGTKAGNKGAEAALTALEMINVLKAIKA.

Residues phenylalanine 22, 57-59, and 81-83 each bind 5-amino-6-(D-ribitylamino)uracil; these read AYE and TVI. (2S)-2-hydroxy-3-oxobutyl phosphate is bound at residue 86–87; sequence GT. Catalysis depends on histidine 89, which acts as the Proton donor. Phenylalanine 114 serves as a coordination point for 5-amino-6-(D-ribitylamino)uracil. Arginine 128 contributes to the (2S)-2-hydroxy-3-oxobutyl phosphate binding site.

This sequence belongs to the DMRL synthase family. Forms an icosahedral capsid composed of 60 subunits, arranged as a dodecamer of pentamers.

The enzyme catalyses (2S)-2-hydroxy-3-oxobutyl phosphate + 5-amino-6-(D-ribitylamino)uracil = 6,7-dimethyl-8-(1-D-ribityl)lumazine + phosphate + 2 H2O + H(+). Its pathway is cofactor biosynthesis; riboflavin biosynthesis; riboflavin from 2-hydroxy-3-oxobutyl phosphate and 5-amino-6-(D-ribitylamino)uracil: step 1/2. Functionally, catalyzes the formation of 6,7-dimethyl-8-ribityllumazine by condensation of 5-amino-6-(D-ribitylamino)uracil with 3,4-dihydroxy-2-butanone 4-phosphate. This is the penultimate step in the biosynthesis of riboflavin. The protein is 6,7-dimethyl-8-ribityllumazine synthase of Escherichia coli O45:K1 (strain S88 / ExPEC).